We begin with the raw amino-acid sequence, 556 residues long: Adenine deaminase (556 aa).

Belongs to the metallo-dependent hydrolases superfamily. Adenine deaminase family. Mn(2+) serves as cofactor.

The catalysed reaction is adenine + H2O + H(+) = hypoxanthine + NH4(+). The sequence is that of Adenine deaminase from Methanocaldococcus jannaschii (strain ATCC 43067 / DSM 2661 / JAL-1 / JCM 10045 / NBRC 100440) (Methanococcus jannaschii).